A 375-amino-acid chain; its full sequence is Citrate synthase (375 aa).

Residues histidine 266 and aspartate 317 contribute to the active site.

Belongs to the citrate synthase family. As to quaternary structure, homohexamer.

It catalyses the reaction oxaloacetate + acetyl-CoA + H2O = citrate + CoA + H(+). Its pathway is carbohydrate metabolism; tricarboxylic acid cycle; isocitrate from oxaloacetate: step 1/2. Its activity is regulated as follows. Allosterically inhibited by NADH. The protein is Citrate synthase (gltA) of Mycolicibacterium smegmatis (Mycobacterium smegmatis).